The primary structure comprises 249 residues: Large ribosomal subunit protein uL4 (249 aa).

This sequence belongs to the universal ribosomal protein uL4 family. In terms of assembly, part of the 50S ribosomal subunit.

Its function is as follows. One of the primary rRNA binding proteins, this protein initially binds near the 5'-end of the 23S rRNA. It is important during the early stages of 50S assembly. It makes multiple contacts with different domains of the 23S rRNA in the assembled 50S subunit and ribosome. Functionally, forms part of the polypeptide exit tunnel. This is Large ribosomal subunit protein uL4 from Methanospirillum hungatei JF-1 (strain ATCC 27890 / DSM 864 / NBRC 100397 / JF-1).